Reading from the N-terminus, the 151-residue chain is MIIMKGYSMEIEGNHAKARIREADISLKDSVNIAHHLRGMPLSRAKEIIDAVINKTYAIPYFRYLDSVSHRPGVGPGRYPVKAAKAFKQLLENVENNAEFKGLNTDNLVIKHIAANKGRMIKKYTPKAYGRAGANFKDLINLEIIVTEGSE.

This sequence belongs to the universal ribosomal protein uL22 family. In terms of assembly, part of the 50S ribosomal subunit.

Its function is as follows. This protein binds specifically to 23S rRNA. It makes multiple contacts with different domains of the 23S rRNA in the assembled 50S subunit and ribosome. In terms of biological role, the globular domain of the protein is located near the polypeptide exit tunnel on the outside of the subunit, while an extended beta-hairpin is found that lines the wall of the exit tunnel in the center of the 70S ribosome. The sequence is that of Large ribosomal subunit protein uL22 from Thermoplasma acidophilum (strain ATCC 25905 / DSM 1728 / JCM 9062 / NBRC 15155 / AMRC-C165).